A 1222-amino-acid chain; its full sequence is Protein SCP160 (1222 aa).

The span at 1 to 12 (MSEEQTAIDSPP) shows a compositional bias: polar residues. The segment at 1 to 59 (MSEEQTAIDSPPSTVEGSVETVTTIDSPSTTASTIAATAEEHPQLEKKPTPLPSLKDLP) is disordered. The segment covering 13 to 38 (STVEGSVETVTTIDSPSTTASTIAAT) has biased composition (low complexity). A compositionally biased stretch (basic and acidic residues) spans 39-49 (AEEHPQLEKKP). Residue Thr50 is modified to Phosphothreonine. Phosphoserine is present on residues Ser54, Ser63, Ser85, Ser87, and Ser89. The tract at residues 79 to 98 (KPAVSNSPSPSPSAPSLTTG) is disordered. The 73-residue stretch at 177 to 249 (PINAVIEVPS…ESVNLAKAKI (73 aa)) folds into the KH 1 domain. Ser630 bears the Phosphoserine mark. 5 KH domains span residues 634-702 (KSKM…KKYL), 712-771 (IITK…HEEL), 782-851 (GHKM…AKRV), 861-929 (FVTE…VEEI), and 939-1001 (SVTK…EKKI). A Phosphoserine modification is found at Ser1112. One can recognise a KH 7 domain in the interval 1153-1216 (YAGYVWGADT…AGVEKAGEMV (64 aa)).

The protein localises to the endoplasmic reticulum membrane. It localises to the nucleus membrane. Its function is as follows. Involved in the control of mitotic chromosome transmission. Required during cell division for faithful partitioning of the ER-nuclear envelope membranes which, in S.cerevisiae, enclose the duplicated chromosomes. The polypeptide is Protein SCP160 (SCP160) (Saccharomyces cerevisiae (strain ATCC 204508 / S288c) (Baker's yeast)).